A 671-amino-acid chain; its full sequence is Transcription factor xilB (671 aa).

A DNA-binding region (zn(2)-C6 fungal-type) is located at residues 11 to 46 (CHSCYTRKQKASESDSICDRQYPCNHCTRRRRPEEC). The segment at 48–90 (YGPPPVKVPSCPPVPADQSETQPRPVESARPTRETPVDDSEAH) is disordered. The segment covering 49-62 (GPPPVKVPSCPPVP) has biased composition (pro residues). The segment covering 77–90 (RPTRETPVDDSEAH) has biased composition (basic and acidic residues). The tract at residues 148–593 (PERQIIDFLV…ATLLFARSVQ (446 aa)) is fungal transcription factor domain. Residues 629–650 (WPSLEAGDPYSMPDNFPSMAQD) form a disordered region.

The protein resides in the nucleus. In terms of biological role, transcription factor; part of the gene cluster that mediates the biosynthesis of the 6-methyl-2-pyrone derivative xylariolide D. May play a role in the regulation of the expression of the highly reducing polyketide synthase xilA and the cytochroe P450 monooxygenase xilC. The sequence is that of Transcription factor xilB from Penicillium rubens (strain ATCC 28089 / DSM 1075 / NRRL 1951 / Wisconsin 54-1255) (Penicillium chrysogenum).